We begin with the raw amino-acid sequence, 676 residues long: RNA helicase NPH-II (676 aa).

Residues 172-347 form the Helicase ATP-binding domain; that stretch reads FSAWISHRPV…VFLPNPAFIH (176 aa). 185-192 lines the ATP pocket; sequence GGTGVGKT. Positions 296–299 match the DEXH box motif; the sequence is DEVH. The Helicase C-terminal domain maps to 366–535; it reads NPSSRMAYIE…NYILYANKFN (170 aa).

It belongs to the DEAD box helicase family. DEAH subfamily. Monomer.

It localises to the virion. The enzyme catalyses ATP + H2O = ADP + phosphate + H(+). In terms of biological role, NTP-dependent helicase that catalyzes unidirectional unwinding of 3'tailed duplex RNAs and plays an important role during transcription of early mRNAs, presumably by preventing R-loop formation behind the elongating RNA polymerase. Might also play a role in the export of newly synthesized mRNA chains out of the core into the cytoplasm. Required for replication and propagation of viral particles. This is RNA helicase NPH-II (OPG084) from Vaccinia virus (strain Ankara) (VACV).